Reading from the N-terminus, the 350-residue chain is MSLAEVRHDWQKAQIEALFALPMNDLLFKAHSIHRETFDPNEVQISRLLSIKTGACPEDCKYCPQSARYDTGLEKERLLEIDKVLTEAKSAKAAGASRFCMGAAWRNPRDKDMPYLTQMVKDVRALGMETCMTLGMLSSEQAGKLADAGLDYYNHNLDTSPEYYGDVITTRTYQSRLDTLTNVRASGMKVCSGGIVGMGEKATDRAGLLQQLANLEQHPDSVPINMLVKVAGTPFENIDDLDPLEFVRTIAVARILMPKSRVRLSAGRESMSDELQSMCFFAGANSIFYGCKLLTTPNPEENDDMSLFRRLGLHPEQGPQANIENDSALLAKASAKQDKSTKQFFDAAAL.

Residues 41-268 (NEVQISRLLS…KSRVRLSAGR (228 aa)) form the Radical SAM core domain. [4Fe-4S] cluster-binding residues include C56, C60, and C63. Residues C100, C131, C191, and R263 each coordinate [2Fe-2S] cluster.

It belongs to the radical SAM superfamily. Biotin synthase family. As to quaternary structure, homodimer. The cofactor is [4Fe-4S] cluster. Requires [2Fe-2S] cluster as cofactor.

It carries out the reaction (4R,5S)-dethiobiotin + (sulfur carrier)-SH + 2 reduced [2Fe-2S]-[ferredoxin] + 2 S-adenosyl-L-methionine = (sulfur carrier)-H + biotin + 2 5'-deoxyadenosine + 2 L-methionine + 2 oxidized [2Fe-2S]-[ferredoxin]. It functions in the pathway cofactor biosynthesis; biotin biosynthesis; biotin from 7,8-diaminononanoate: step 2/2. Functionally, catalyzes the conversion of dethiobiotin (DTB) to biotin by the insertion of a sulfur atom into dethiobiotin via a radical-based mechanism. The polypeptide is Biotin synthase (Shewanella frigidimarina (strain NCIMB 400)).